We begin with the raw amino-acid sequence, 595 residues long: Actin-histidine N-methyltransferase (595 aa).

The tract at residues 1–22 (MGKKSRVKTQKSGTGATATVSP) is disordered. The segment covering 10–20 (QKSGTGATATV) has biased composition (polar residues). S-adenosyl-L-methionine-binding positions include arginine 75, 104–106 (EGF), arginine 254, 275–279 (DMCNH), and 325–327 (SGF). The 221-residue stretch at 94-314 (EGFEMVNFKE…AGEQIYIFYG (221 aa)) folds into the SET domain. At serine 513 the chain carries Phosphoserine. The segment covering 549-573 (ENGLVNGENSIPNGTRSENENLNQE) has biased composition (polar residues). Residues 549-595 (ENGLVNGENSIPNGTRSENENLNQEGSKRAVEDAKGSSSDSTDEVKE) form a disordered region. Residues 574 to 583 (GSKRAVEDAK) are compositionally biased toward basic and acidic residues.

Belongs to the class V-like SAM-binding methyltransferase superfamily. SETD3 actin-histidine methyltransferase family. Interacts with MYOD1. In terms of processing, phosphorylated by GSK3B, which is required for recognition by the SCF(FBXW7) complex and subsequent degradation. Ubiquitinated by the SCF(FBXW7) complex following phosphorylation by GSK3B, leading to its degradation by the proteasome.

The protein localises to the cytoplasm. Its subcellular location is the nucleus. It carries out the reaction L-histidyl-[protein] + S-adenosyl-L-methionine = N(tele)-methyl-L-histidyl-[protein] + S-adenosyl-L-homocysteine + H(+). In terms of biological role, protein-histidine N-methyltransferase that specifically mediates 3-methylhistidine (tele-methylhistidine) methylation of actin at 'His-73'. Histidine methylation of actin is required for smooth muscle contraction of the laboring uterus during delivery. Does not have protein-lysine N-methyltransferase activity and probably only catalyzes histidine methylation of actin. This is Actin-histidine N-methyltransferase from Plecturocebus moloch (Dusky titi monkey).